Consider the following 322-residue polypeptide: Ethylmalonyl-CoA decarboxylase (322 aa).

At lysine 232 the chain carries N6-acetyllysine; alternate. Lysine 232 bears the N6-succinyllysine; alternate mark. N6-succinyllysine is present on lysine 316.

Belongs to the enoyl-CoA hydratase/isomerase family.

The protein localises to the cytoplasm. The protein resides in the cytosol. The catalysed reaction is (2S)-ethylmalonyl-CoA + H(+) = butanoyl-CoA + CO2. The enzyme catalyses (S)-methylmalonyl-CoA + H(+) = propanoyl-CoA + CO2. It catalyses the reaction (2R)-ethylmalonyl-CoA + H(+) = butanoyl-CoA + CO2. Its function is as follows. Decarboxylates ethylmalonyl-CoA, a potentially toxic metabolite, to form butyryl-CoA, suggesting it might be involved in metabolite proofreading. Acts preferentially on (S)-ethylmalonyl-CoA but also has some activity on the (R)-isomer. Also has methylmalonyl-CoA decarboxylase activity at lower level. The protein is Ethylmalonyl-CoA decarboxylase (Echdc1) of Mus musculus (Mouse).